The following is a 300-amino-acid chain: Tyrosine recombinase XerC (300 aa).

In terms of domain architecture, Core-binding (CB) spans 1–86 (MESVLDAFDQ…AVKTFTAWAV (86 aa)). Residues 107–294 (TLPAVLRQDQ…TVARLRAVHD (188 aa)) enclose the Tyr recombinase domain. Catalysis depends on residues R151, K175, H246, R249, and H272. Y281 (O-(3'-phospho-DNA)-tyrosine intermediate) is an active-site residue.

It belongs to the 'phage' integrase family. XerC subfamily. In terms of assembly, forms a cyclic heterotetrameric complex composed of two molecules of XerC and two molecules of XerD.

It localises to the cytoplasm. Functionally, site-specific tyrosine recombinase, which acts by catalyzing the cutting and rejoining of the recombining DNA molecules. The XerC-XerD complex is essential to convert dimers of the bacterial chromosome into monomers to permit their segregation at cell division. It also contributes to the segregational stability of plasmids. The chain is Tyrosine recombinase XerC from Mycobacterium sp. (strain KMS).